The primary structure comprises 146 residues: D-aminoacyl-tRNA deacylase (146 aa).

The Gly-cisPro motif, important for rejection of L-amino acids signature appears at 137-138 (GP).

Belongs to the DTD family. Homodimer.

It is found in the cytoplasm. It carries out the reaction glycyl-tRNA(Ala) + H2O = tRNA(Ala) + glycine + H(+). It catalyses the reaction a D-aminoacyl-tRNA + H2O = a tRNA + a D-alpha-amino acid + H(+). Its function is as follows. An aminoacyl-tRNA editing enzyme that deacylates mischarged D-aminoacyl-tRNAs. Also deacylates mischarged glycyl-tRNA(Ala), protecting cells against glycine mischarging by AlaRS. Acts via tRNA-based rather than protein-based catalysis; rejects L-amino acids rather than detecting D-amino acids in the active site. By recycling D-aminoacyl-tRNA to D-amino acids and free tRNA molecules, this enzyme counteracts the toxicity associated with the formation of D-aminoacyl-tRNA entities in vivo and helps enforce protein L-homochirality. This Bacillus cereus (strain ATCC 14579 / DSM 31 / CCUG 7414 / JCM 2152 / NBRC 15305 / NCIMB 9373 / NCTC 2599 / NRRL B-3711) protein is D-aminoacyl-tRNA deacylase.